Consider the following 154-residue polypeptide: 6,7-dimethyl-8-ribityllumazine synthase (154 aa).

5-amino-6-(D-ribitylamino)uracil contacts are provided by residues Phe23, 57–59, and 81–83; these read AYE and AVI. 86 to 87 contacts (2S)-2-hydroxy-3-oxobutyl phosphate; it reads AT. The active-site Proton donor is the His89. Phe114 contributes to the 5-amino-6-(D-ribitylamino)uracil binding site. A (2S)-2-hydroxy-3-oxobutyl phosphate-binding site is contributed by Arg128.

It belongs to the DMRL synthase family.

It catalyses the reaction (2S)-2-hydroxy-3-oxobutyl phosphate + 5-amino-6-(D-ribitylamino)uracil = 6,7-dimethyl-8-(1-D-ribityl)lumazine + phosphate + 2 H2O + H(+). The protein operates within cofactor biosynthesis; riboflavin biosynthesis; riboflavin from 2-hydroxy-3-oxobutyl phosphate and 5-amino-6-(D-ribitylamino)uracil: step 1/2. In terms of biological role, catalyzes the formation of 6,7-dimethyl-8-ribityllumazine by condensation of 5-amino-6-(D-ribitylamino)uracil with 3,4-dihydroxy-2-butanone 4-phosphate. This is the penultimate step in the biosynthesis of riboflavin. This chain is 6,7-dimethyl-8-ribityllumazine synthase, found in Desulforamulus reducens (strain ATCC BAA-1160 / DSM 100696 / MI-1) (Desulfotomaculum reducens).